The chain runs to 664 residues: Cyclic nucleotide-gated channel alpha-2 (664 aa).

Residues methionine 1–serine 11 are compositionally biased toward polar residues. Residues methionine 1–glutamate 49 are disordered. Topologically, residues methionine 1 to leucine 144 are cytoplasmic. Over residues proline 12–alanine 23 the composition is skewed to low complexity. Residues phenylalanine 145–aspartate 166 traverse the membrane as a helical segment. At leucine 167–leucine 176 the chain is on the extracellular side. A helical membrane pass occupies residues valine 177–glycine 197. The Cytoplasmic segment spans residues phenylalanine 198–lysine 222. Residues leucine 223–histidine 241 traverse the membrane as a helical segment. Residues serine 242 to arginine 246 lie on the Extracellular side of the membrane. A helical membrane pass occupies residues phenylalanine 247 to threonine 265. Topologically, residues arginine 266–isoleucine 272 are cytoplasmic. The tract at residues proline 270–methionine 378 is ion conduction pathway. A helical membrane pass occupies residues phenylalanine 273–isoleucine 296. The Extracellular portion of the chain corresponds to serine 297–tyrosine 319. The next 2 membrane-spanning stretches (helical) occupy residues leucine 320–isoleucine 354 and phenylalanine 355–asparagine 379. Positions threonine 337–glutamate 340 are selectivity filter. Residues alanine 380–histidine 456 form a C-linker region. Topologically, residues alanine 380–proline 664 are cytoplasmic. The segment at alanine 460–lysine 580 is cyclic nucleotide-binding domain. Residues glycine 520, serine 523, arginine 536, and threonine 537 each coordinate 3',5'-cyclic GMP. Residues arginine 536 and threonine 537 each contribute to the 3',5'-cyclic AMP site. A coiled-coil region spans residues valine 597–aspartate 651. The tract at residues lysine 641–proline 664 is disordered.

Belongs to the cyclic nucleotide-gated cation channel (TC 1.A.1.5) family. CNGA2 subfamily. The olfactory cyclic nucleotide-gated channel is an heterotetramer composed of CNGA2, CNGA4 and CNGB1b subunits with 2:1:1 stoichiometry.

Its subcellular location is the cell projection. It localises to the cilium membrane. It catalyses the reaction Ca(2+)(in) = Ca(2+)(out). The catalysed reaction is Na(+)(in) = Na(+)(out). The enzyme catalyses K(+)(in) = K(+)(out). It carries out the reaction NH4(+)(in) = NH4(+)(out). It catalyses the reaction Rb(+)(in) = Rb(+)(out). The catalysed reaction is Li(+)(in) = Li(+)(out). The enzyme catalyses Cs(+)(in) = Cs(+)(out). In terms of biological role, pore-forming subunit of the olfactory cyclic nucleotide-gated channel. Operates in the cilia of olfactory sensory neurons where chemical stimulation of the odorant is converted to an electrical signal. Mediates odorant-induced cAMP-dependent Ca(2+) influx triggering neuron depolarization. The rise of intracellular Ca(2+) levels potentiates the olfactory response by activating Ca(2+)-dependent Cl(-) channels, but it also serves as a negative feedback signal to desensitize the channel for rapid adaptation to odorants. Conducts cAMP- and cGMP-gated ion currents, with permeability for monovalent and divalent cations. The chain is Cyclic nucleotide-gated channel alpha-2 from Homo sapiens (Human).